A 441-amino-acid chain; its full sequence is Carbohydrate sulfotransferase 3 (441 aa).

Over 1–4 (MKMR) the chain is Cytoplasmic. A helical; Signal-anchor for type II membrane protein transmembrane segment spans residues 5–21 (SKYAIILFFVVALVIIE). Over 22-441 (KERNIISRVS…LLENRNFWIT (420 aa)) the chain is Lumenal. N-linked (GlcNAc...) asparagine glycosylation is found at Asn-47 and Asn-58. 3'-phosphoadenylyl sulfate is bound at residue 106 to 112 (TRTGSSF). Residue Asn-221 is glycosylated (N-linked (GlcNAc...) asparagine). 266 to 274 (RDPRAVLAS) provides a ligand contact to 3'-phosphoadenylyl sulfate. Asn-427 carries N-linked (GlcNAc...) asparagine glycosylation.

Belongs to the sulfotransferase 1 family. Gal/GlcNAc/GalNAc subfamily. N-glycosylated. In electric organ, it is moderately expressed in spinal cord and electric lobe and undetectable in non-neural tissues. Expressed in a punctate distribution in the innervated portion of electrocytes. In the CNS, it is localized within the somas of motor neurons and neurons of the electromotor nucleus.

It is found in the golgi apparatus membrane. It carries out the reaction chondroitin beta-D-glucuronate + n 3'-phosphoadenylyl sulfate = chondroitin 6'-sulfate + n adenosine 3',5'-bisphosphate + n H(+). The enzyme catalyses 3'-phosphoadenylyl sulfate + keratan = adenosine 3',5'-bisphosphate + keratan 6'-sulfate.. In terms of biological role, sulfotransferase that utilizes 3'-phospho-5'-adenylyl sulfate (PAPS) as sulfonate donor to catalyze the transfer of sulfate to position 6 of the N-acetylgalactosamine (GalNAc) residue of chondroitin. Chondroitin sulfate constitutes the predominant proteoglycan present in cartilage and is distributed on the surfaces of many cells and extracellular matrices. Catalyzes with a lower efficiency the sulfation of Gal residues of keratan sulfate, another glycosaminoglycan. Can also catalyze the sulfation of the Gal residues in sialyl N-acetyllactosamine (sialyl LacNAc) oligosaccharides. The polypeptide is Carbohydrate sulfotransferase 3 (CHST3) (Tetronarce californica (Pacific electric ray)).